The primary structure comprises 360 residues: Isopentenyl-diphosphate delta-isomerase (360 aa).

Residue 12–13 (RK) participates in substrate binding. FMN contacts are provided by residues 69 to 71 (SMT), S99, and N130. 99 to 101 (SQR) lines the substrate pocket. Q164 is a substrate binding site. E165 contributes to the Mg(2+) binding site. FMN contacts are provided by residues K196, T226, 277-279 (GVR), and 298-299 (AK).

This sequence belongs to the IPP isomerase type 2 family. As to quaternary structure, homooctamer. Dimer of tetramers. The cofactor is FMN. It depends on NADPH as a cofactor. Mg(2+) serves as cofactor.

It is found in the cytoplasm. It catalyses the reaction isopentenyl diphosphate = dimethylallyl diphosphate. In terms of biological role, involved in the biosynthesis of isoprenoids. Catalyzes the 1,3-allylic rearrangement of the homoallylic substrate isopentenyl (IPP) to its allylic isomer, dimethylallyl diphosphate (DMAPP). The polypeptide is Isopentenyl-diphosphate delta-isomerase (Halobacterium salinarum (strain ATCC 700922 / JCM 11081 / NRC-1) (Halobacterium halobium)).